A 108-amino-acid chain; its full sequence is UPF0060 membrane protein Msil_1658 (108 aa).

The next 4 helical transmembrane spans lie at 5 to 25 (LVYV…WAWL), 31 to 51 (SLWL…LTLI), 62 to 82 (AYGG…EGVW), and 88 to 108 (LGGA…PRPA).

It belongs to the UPF0060 family.

Its subcellular location is the cell inner membrane. The sequence is that of UPF0060 membrane protein Msil_1658 from Methylocella silvestris (strain DSM 15510 / CIP 108128 / LMG 27833 / NCIMB 13906 / BL2).